Consider the following 427-residue polypeptide: Serine--tRNA ligase (427 aa).

Residue 231–233 participates in L-serine binding; it reads TAE. 262–264 lines the ATP pocket; sequence RSE. An L-serine-binding site is contributed by glutamate 285. Residue 349 to 352 participates in ATP binding; sequence EISS. Serine 385 contributes to the L-serine binding site.

The protein belongs to the class-II aminoacyl-tRNA synthetase family. Type-1 seryl-tRNA synthetase subfamily. In terms of assembly, homodimer. The tRNA molecule binds across the dimer.

The protein resides in the cytoplasm. The catalysed reaction is tRNA(Ser) + L-serine + ATP = L-seryl-tRNA(Ser) + AMP + diphosphate + H(+). It catalyses the reaction tRNA(Sec) + L-serine + ATP = L-seryl-tRNA(Sec) + AMP + diphosphate + H(+). The protein operates within aminoacyl-tRNA biosynthesis; selenocysteinyl-tRNA(Sec) biosynthesis; L-seryl-tRNA(Sec) from L-serine and tRNA(Sec): step 1/1. Its function is as follows. Catalyzes the attachment of serine to tRNA(Ser). Is also able to aminoacylate tRNA(Sec) with serine, to form the misacylated tRNA L-seryl-tRNA(Sec), which will be further converted into selenocysteinyl-tRNA(Sec). The polypeptide is Serine--tRNA ligase (Brucella abortus (strain S19)).